A 339-amino-acid polypeptide reads, in one-letter code: Meiotic recombination protein rec7 (339 aa).

Its function is as follows. May be involved primarily in the early steps of meiotic recombination. This chain is Meiotic recombination protein rec7 (rec7), found in Schizosaccharomyces pombe (strain 972 / ATCC 24843) (Fission yeast).